The following is a 251-amino-acid chain: Triosephosphate isomerase (251 aa).

A substrate-binding site is contributed by 9 to 11 (NWK). His95 acts as the Electrophile in catalysis. The active-site Proton acceptor is the Glu167. Substrate is bound by residues Gly173, Ser213, and 234 to 235 (GG). Position 213 is a phosphoserine (Ser213).

Belongs to the triosephosphate isomerase family. In terms of assembly, homodimer.

It is found in the cytoplasm. It carries out the reaction D-glyceraldehyde 3-phosphate = dihydroxyacetone phosphate. It functions in the pathway carbohydrate biosynthesis; gluconeogenesis. The protein operates within carbohydrate degradation; glycolysis; D-glyceraldehyde 3-phosphate from glycerone phosphate: step 1/1. Its function is as follows. Involved in the gluconeogenesis. Catalyzes stereospecifically the conversion of dihydroxyacetone phosphate (DHAP) to D-glyceraldehyde-3-phosphate (G3P). The protein is Triosephosphate isomerase of Bacillus cytotoxicus (strain DSM 22905 / CIP 110041 / 391-98 / NVH 391-98).